The sequence spans 409 residues: Arginine deiminase (409 aa).

Catalysis depends on Cys-399, which acts as the Amidino-cysteine intermediate.

This sequence belongs to the arginine deiminase family.

The protein localises to the cytoplasm. The catalysed reaction is L-arginine + H2O = L-citrulline + NH4(+). The protein operates within amino-acid degradation; L-arginine degradation via ADI pathway; carbamoyl phosphate from L-arginine: step 1/2. This Borreliella afzelii (strain PKo) (Borrelia afzelii) protein is Arginine deiminase.